We begin with the raw amino-acid sequence, 148 residues long: UPF0178 protein LPC_0108 (148 aa).

This sequence belongs to the UPF0178 family.

The chain is UPF0178 protein LPC_0108 from Legionella pneumophila (strain Corby).